Reading from the N-terminus, the 920-residue chain is Valine--tRNA ligase (920 aa).

Positions 40-50 (PNVTGTLHMGH) match the 'HIGH' region motif. The short motif at 522–526 (KMSKS) is the 'KMSKS' region element. K525 contacts ATP. Coiled-coil stretches lie at residues 642-668 (EWIRTRLQQTIKNAEEALSQYRFDLLA) and 849-920 (AGVI…IESL).

It belongs to the class-I aminoacyl-tRNA synthetase family. ValS type 1 subfamily. In terms of assembly, monomer.

The protein localises to the cytoplasm. The catalysed reaction is tRNA(Val) + L-valine + ATP = L-valyl-tRNA(Val) + AMP + diphosphate. Catalyzes the attachment of valine to tRNA(Val). As ValRS can inadvertently accommodate and process structurally similar amino acids such as threonine, to avoid such errors, it has a 'posttransfer' editing activity that hydrolyzes mischarged Thr-tRNA(Val) in a tRNA-dependent manner. The protein is Valine--tRNA ligase of Coxiella burnetii (strain RSA 493 / Nine Mile phase I).